A 268-amino-acid polypeptide reads, in one-letter code: Tryptophan synthase alpha chain (268 aa).

Residues Glu-49 and Asp-60 each act as proton acceptor in the active site.

The protein belongs to the TrpA family. As to quaternary structure, tetramer of two alpha and two beta chains.

It carries out the reaction (1S,2R)-1-C-(indol-3-yl)glycerol 3-phosphate + L-serine = D-glyceraldehyde 3-phosphate + L-tryptophan + H2O. It participates in amino-acid biosynthesis; L-tryptophan biosynthesis; L-tryptophan from chorismate: step 5/5. Functionally, the alpha subunit is responsible for the aldol cleavage of indoleglycerol phosphate to indole and glyceraldehyde 3-phosphate. The sequence is that of Tryptophan synthase alpha chain from Xanthomonas euvesicatoria pv. vesicatoria (strain 85-10) (Xanthomonas campestris pv. vesicatoria).